The following is a 512-amino-acid chain: Protein SHC1 (512 aa).

Over residues 101–113 (EQDEFENDVEDDA) the composition is skewed to acidic residues. Disordered stretches follow at residues 101 to 122 (EQDEFENDVEDDASSSLKEKSQ) and 144 to 164 (DGNSEFHDFAEPPPSQNESVA). Sel1-like repeat units lie at residues 318 to 353 (PDAQYLLGDAYSSGVFGKIKNRRAFLLFSAAAKRMH), 354 to 389 (IESVYRTAICYECGLGVTRNAPKAVNFLTFAATKNH), 390 to 429 (PAAMYKLGVYSYHGLMGLPDDILTKMDGYRWLRRATSMAS), and 433 to 470 (CGAPFELANIYMTGYKDLIISDPDYAMALYEKAAALGH).

It belongs to the SKT5 family.

It is found in the cytoplasm. Its subcellular location is the cytoplasmic granule membrane. Required for the activation of chitin synthase III (CHS3) activity during the sporulation process. This Saccharomyces cerevisiae (strain ATCC 204508 / S288c) (Baker's yeast) protein is Protein SHC1 (SHC1).